A 436-amino-acid polypeptide reads, in one-letter code: Serine--tRNA ligase (436 aa).

An L-serine-binding site is contributed by 241-243 (TSE). Residue 272–274 (RAE) coordinates ATP. L-serine is bound at residue E295. 359 to 362 (EISS) is an ATP binding site. L-serine is bound at residue S395.

The protein belongs to the class-II aminoacyl-tRNA synthetase family. Type-1 seryl-tRNA synthetase subfamily. Homodimer. The tRNA molecule binds across the dimer.

Its subcellular location is the cytoplasm. It catalyses the reaction tRNA(Ser) + L-serine + ATP = L-seryl-tRNA(Ser) + AMP + diphosphate + H(+). The catalysed reaction is tRNA(Sec) + L-serine + ATP = L-seryl-tRNA(Sec) + AMP + diphosphate + H(+). It participates in aminoacyl-tRNA biosynthesis; selenocysteinyl-tRNA(Sec) biosynthesis; L-seryl-tRNA(Sec) from L-serine and tRNA(Sec): step 1/1. Catalyzes the attachment of serine to tRNA(Ser). Is also able to aminoacylate tRNA(Sec) with serine, to form the misacylated tRNA L-seryl-tRNA(Sec), which will be further converted into selenocysteinyl-tRNA(Sec). This Beijerinckia indica subsp. indica (strain ATCC 9039 / DSM 1715 / NCIMB 8712) protein is Serine--tRNA ligase.